Consider the following 329-residue polypeptide: Diaminopimelate epimerase (329 aa).

Residues N14 and N73 each contribute to the substrate site. C82 acts as the Proton donor in catalysis. Residues 83–84, N170, N206, and 224–225 each bind substrate; these read GN and ER. The active-site Proton acceptor is C233. A substrate-binding site is contributed by 234-235; it reads GT.

This sequence belongs to the diaminopimelate epimerase family. In terms of assembly, homodimer.

It localises to the cytoplasm. It catalyses the reaction (2S,6S)-2,6-diaminopimelate = meso-2,6-diaminopimelate. It functions in the pathway amino-acid biosynthesis; L-lysine biosynthesis via DAP pathway; DL-2,6-diaminopimelate from LL-2,6-diaminopimelate: step 1/1. In terms of biological role, catalyzes the stereoinversion of LL-2,6-diaminopimelate (L,L-DAP) to meso-diaminopimelate (meso-DAP), a precursor of L-lysine and an essential component of the bacterial peptidoglycan. This Listeria monocytogenes serotype 4a (strain HCC23) protein is Diaminopimelate epimerase.